The chain runs to 128 residues: Small ribosomal subunit protein uS9 (128 aa).

The protein belongs to the universal ribosomal protein uS9 family.

In Flavobacterium psychrophilum (strain ATCC 49511 / DSM 21280 / CIP 103535 / JIP02/86), this protein is Small ribosomal subunit protein uS9.